Here is a 172-residue protein sequence, read N- to C-terminus: NADH-quinone oxidoreductase subunit B (172 aa).

[4Fe-4S] cluster is bound by residues cysteine 46, cysteine 47, cysteine 111, and cysteine 141.

The protein belongs to the complex I 20 kDa subunit family. As to quaternary structure, NDH-1 is composed of 14 different subunits. Subunits NuoB, C, D, E, F, and G constitute the peripheral sector of the complex. It depends on [4Fe-4S] cluster as a cofactor.

The protein localises to the cell membrane. The enzyme catalyses a quinone + NADH + 5 H(+)(in) = a quinol + NAD(+) + 4 H(+)(out). NDH-1 shuttles electrons from NADH, via FMN and iron-sulfur (Fe-S) centers, to quinones in the respiratory chain. The immediate electron acceptor for the enzyme in this species is believed to be a menaquinone. Couples the redox reaction to proton translocation (for every two electrons transferred, four hydrogen ions are translocated across the cytoplasmic membrane), and thus conserves the redox energy in a proton gradient. The sequence is that of NADH-quinone oxidoreductase subunit B from Bacillus cereus (strain G9842).